Here is a 121-residue protein sequence, read N- to C-terminus: MVHMHITAWALGLILFFVAYSLYSAGRKGKGVHMGLRLMYIIIIVTGFMLYMGIMKTATSNMHMWYGLKMVAGILVIGGMEMVLVKMSKNKATGAVWGLFIVALVAVFYLGLKLPIGWQVF.

A run of 4 helical transmembrane segments spans residues 6 to 26 (ITAW…YSAG), 38 to 58 (LMYI…MKTA), 65 to 85 (WYGL…MVLV), and 92 to 112 (ATGA…YLGL).

It belongs to the UPF0344 family.

The protein resides in the cell membrane. The sequence is that of UPF0344 protein BCA_1194 from Bacillus cereus (strain 03BB102).